We begin with the raw amino-acid sequence, 190 residues long: dTTP/UTP pyrophosphatase (190 aa).

D68 (proton acceptor) is an active-site residue.

Belongs to the Maf family. YhdE subfamily. Requires a divalent metal cation as cofactor.

It localises to the cytoplasm. The enzyme catalyses dTTP + H2O = dTMP + diphosphate + H(+). It catalyses the reaction UTP + H2O = UMP + diphosphate + H(+). In terms of biological role, nucleoside triphosphate pyrophosphatase that hydrolyzes dTTP and UTP. May have a dual role in cell division arrest and in preventing the incorporation of modified nucleotides into cellular nucleic acids. In Acholeplasma laidlawii (strain PG-8A), this protein is dTTP/UTP pyrophosphatase.